Consider the following 61-residue polypeptide: Small ribosomal subunit protein uS14 (61 aa).

Cys24, Cys27, Cys40, and Cys43 together coordinate Zn(2+).

This sequence belongs to the universal ribosomal protein uS14 family. Zinc-binding uS14 subfamily. Part of the 30S ribosomal subunit. Contacts proteins S3 and S10. Zn(2+) serves as cofactor.

Binds 16S rRNA, required for the assembly of 30S particles and may also be responsible for determining the conformation of the 16S rRNA at the A site. This chain is Small ribosomal subunit protein uS14, found in Spiroplasma citri.